The sequence spans 521 residues: Maturase K (521 aa).

It belongs to the intron maturase 2 family. MatK subfamily.

Its subcellular location is the plastid. The protein localises to the chloroplast. Functionally, usually encoded in the trnK tRNA gene intron. Probably assists in splicing its own and other chloroplast group II introns. The sequence is that of Maturase K from Trillium catesbaei (Catesby's trillium).